Consider the following 1134-residue polypeptide: DNA polymerase II large subunit (1134 aa).

This sequence belongs to the archaeal DNA polymerase II family. Heterodimer of a large subunit and a small subunit.

It carries out the reaction DNA(n) + a 2'-deoxyribonucleoside 5'-triphosphate = DNA(n+1) + diphosphate. It catalyses the reaction Exonucleolytic cleavage in the 3'- to 5'-direction to yield nucleoside 5'-phosphates.. Its function is as follows. Possesses two activities: a DNA synthesis (polymerase) and an exonucleolytic activity that degrades single-stranded DNA in the 3'- to 5'-direction. Has a template-primer preference which is characteristic of a replicative DNA polymerase. The protein is DNA polymerase II large subunit of Methanocella arvoryzae (strain DSM 22066 / NBRC 105507 / MRE50).